Reading from the N-terminus, the 88-residue chain is MSQGDIIHFTSQALWLVLVLSMPPVLVAAVVGTLVSLVQALTQIQEQTLGFVIKLIAVVVTLFATASWLGNELHSFAEMTMMKIQGIR.

A run of 2 helical transmembrane segments spans residues Trp15–Val35 and Leu49–Leu69.

The protein belongs to the FliQ/MopD/SpaQ family.

The protein localises to the cell membrane. Component of the Yop secretion machinery. The protein is Yop proteins translocation protein S (yscS) of Yersinia pestis.